Here is a 417-residue protein sequence, read N- to C-terminus: Squalene synthase (417 aa).

The NADP(+) site is built by Arg-52 and Arg-77. Residues Asp-80, Glu-83, and Asp-84 each contribute to the Mg(2+) site. Arg-218 is a binding site for NADP(+). The helical transmembrane segment at 284-304 (SIFNFCAIPQVMAIATLAACY) threads the bilayer. NADP(+) contacts are provided by Lys-315 and Arg-317. A helical membrane pass occupies residues 384–404 (PIYLSFVMLLAALSWQYLSTL).

This sequence belongs to the phytoene/squalene synthase family. The cofactor is Mg(2+).

Its subcellular location is the endoplasmic reticulum membrane. It carries out the reaction 2 (2E,6E)-farnesyl diphosphate + NADPH + H(+) = squalene + 2 diphosphate + NADP(+). It catalyses the reaction 2 (2E,6E)-farnesyl diphosphate + NADH + H(+) = squalene + 2 diphosphate + NAD(+). The catalysed reaction is presqualene diphosphate + NADH + H(+) = squalene + diphosphate + NAD(+). The enzyme catalyses presqualene diphosphate + NADPH + H(+) = squalene + diphosphate + NADP(+). It carries out the reaction 2 (2E,6E)-farnesyl diphosphate = presqualene diphosphate + diphosphate. Its pathway is terpene metabolism; lanosterol biosynthesis; lanosterol from farnesyl diphosphate: step 1/3. Functionally, catalyzes the condensation of 2 farnesyl pyrophosphate (FPP) moieties to form squalene. Proceeds in two distinct steps. In the first half-reaction, two molecules of FPP react to form the stable presqualene diphosphate intermediate (PSQPP), with concomitant release of a proton and a molecule of inorganic diphosphate. In the second half-reaction, PSQPP undergoes heterolysis, isomerization, and reduction with NADPH or NADH to form squalene. It is the first committed enzyme of the sterol biosynthesis pathway. The polypeptide is Squalene synthase (FDFT1) (Bos taurus (Bovine)).